The chain runs to 180 residues: Diphosphoinositol polyphosphate phosphohydrolase 2 (180 aa).

Met-1 bears the N-acetylmethionine mark. Residues Arg-10, 18–20, and 39–41 contribute to the substrate site; these read KKR and SSR. Residues 18–144 enclose the Nudix hydrolase domain; it reads KKRAACLCFR…VHAEYLEKLK (127 aa). Mg(2+) is bound by residues Gly-50 and Glu-66. The Nudix box motif lies at 51 to 72; the sequence is GGMEPEEEPGGAAVREVYEEAG. Glu-69 (proton acceptor) is an active-site residue. Residue Glu-70 participates in Mg(2+) binding. Substrate-binding positions include 89–91, Arg-115, and Lys-133; that span reads RKH.

The protein belongs to the Nudix hydrolase family. DIPP subfamily. It depends on Mg(2+) as a cofactor. The cofactor is Mn(2+). As to expression, expressed in heart and, at lower level in skeletal muscle, pancreas and kidney.

The protein localises to the cytoplasm. The enzyme catalyses diphospho-myo-inositol polyphosphate + H2O = myo-inositol polyphosphate + phosphate.. The catalysed reaction is 5-diphospho-1D-myo-inositol 1,2,3,4,6-pentakisphosphate + H2O = 1D-myo-inositol hexakisphosphate + phosphate + H(+). It carries out the reaction 3,5-bis(diphospho)-1D-myo-inositol 1,2,4,6-tetrakisphosphate + H2O = 3-diphospho-1D-myo-inositol 1,2,4,5,6-pentakisphosphate + phosphate + 2 H(+). It catalyses the reaction 5-diphospho-1D-myo-inositol 1,3,4,6-tetrakisphosphate + H2O = 1D-myo-inositol 1,3,4,5,6-pentakisphosphate + phosphate + H(+). The enzyme catalyses P(1),P(6)-bis(5'-adenosyl) hexaphosphate + H2O = 2 ATP + 2 H(+). The catalysed reaction is P(1),P(5)-bis(5'-adenosyl) pentaphosphate + H2O = ADP + ATP + 2 H(+). It carries out the reaction 5-phospho-alpha-D-ribose 1-diphosphate + H2O = alpha-D-ribose 1,5-bisphosphate + phosphate + H(+). Its function is as follows. Cleaves the beta-phosphate from diphosphoinositol polyphosphates such as PP-InsP5 (diphosphoinositol pentakisphosphate), PP-InsP4 (diphosphoinositol tetrakisphosphate) and [PP]2-InsP4 (bisdiphosphoinositol tetrakisphosphate), suggesting that it may play a role in signal transduction. Diadenosine polyphosphates, particularly Ap6A (P(1),P(6)-bis(5a-adenosyl) hexaphosphate) and Ap5A (P(1),P(5)-bis(5'-adenosyl) pentaphosphate) are downstream effectors of a signaling cascade that regulates cardiac KATP channels, can also be substrates, although with lower preference than the diphosphoinositol polyphosphates. Can also catalyze the hydrolysis of 5-phosphoribose 1-diphosphate, generating the glycolytic activator ribose 1,5-bisphosphate. Does not play a role in U8 snoRNA decapping activity. Binds U8 snoRNA. This chain is Diphosphoinositol polyphosphate phosphohydrolase 2, found in Homo sapiens (Human).